The sequence spans 263 residues: Chymotrypsinogen B2 (263 aa).

A signal peptide spans 1-18; the sequence is MAFLWLLSCWALLGTTFG. Intrachain disulfides connect cysteine 19/cysteine 140, cysteine 60/cysteine 76, cysteine 154/cysteine 219, cysteine 186/cysteine 200, and cysteine 209/cysteine 238. The 228-residue stretch at 34-261 folds into the Peptidase S1 domain; that stretch reads IVNGEDAVPG…LIPWVQKILA (228 aa). Catalysis depends on charge relay system residues histidine 75 and aspartate 120. The Charge relay system role is filled by serine 213.

This sequence belongs to the peptidase S1 family.

It localises to the secreted. Its subcellular location is the extracellular space. The enzyme catalyses Preferential cleavage: Tyr-|-Xaa, Trp-|-Xaa, Phe-|-Xaa, Leu-|-Xaa.. The protein is Chymotrypsinogen B2 (CTRB2) of Homo sapiens (Human).